A 549-amino-acid chain; its full sequence is Zinc finger protein 382 (549 aa).

The tract at residues 1–105 (MNCHSVPLQG…DKPPTSIVII (105 aa)) is mediates interaction with TRIM28. Represses transcription regions lie at residues 10–51 (GPVS…FISV) and 75–210 (MFPS…PEQR). The KRAB domain maps to 12-83 (VSFKDVTVDF…RMFPSQSYLE (72 aa)). 10 consecutive C2H2-type zinc fingers follow at residues 211-233 (FECD…DRAH), 295-317 (FQCP…QRIH), 323-345 (YICS…EKTH), 351-373 (YLCV…HKTH), 379-401 (YECT…QRTH), 407-429 (YQCA…QRTH), 435-457 (YMCS…QRIH), 463-485 (YVCS…YRIH), 491-513 (NGCP…QKTH), and 519-541 (YECH…QKTH). Residues 295-549 (FQCPYCGNSF…THKAETVRFQ (255 aa)) form a required for transcriptional repression activity; probably mediates sequence-specific DNA-binding region.

It belongs to the krueppel C2H2-type zinc-finger protein family. In terms of assembly, interacts with TRIM28; enhances the transcriptional repressor activity. In terms of tissue distribution, ubiquitously expressed with higher expression in lung, kidney and testis.

The protein localises to the nucleus. Functionally, functions as a sequence-specific transcriptional repressor. The protein is Zinc finger protein 382 (Znf382) of Rattus norvegicus (Rat).